We begin with the raw amino-acid sequence, 638 residues long: NADH-ubiquinone oxidoreductase chain 5 (638 aa).

Helical transmembrane passes span 7–27 (TIVS…IFFF), 66–86 (FAIS…LISV), 112–132 (FLLD…TWSI), 169–189 (LFLV…LISW), 203–223 (AVIY…LAVL), 242–262 (FVLF…AQFG), 275–295 (TPVS…FLLV), 307–327 (ANTI…STAI), 335–354 (IIAY…IGIG), 365–385 (THAF…HSLN), 404–424 (SACL…AGFY), 445–465 (LGIV…FFCF), 487–507 (ALLR…NFIF), 520–540 (GLPL…LSYL), and 618–638 (YIAS…IVLS).

It belongs to the complex I subunit 5 family.

Its subcellular location is the mitochondrion inner membrane. The enzyme catalyses a ubiquinone + NADH + 5 H(+)(in) = a ubiquinol + NAD(+) + 4 H(+)(out). Functionally, core subunit of the mitochondrial membrane respiratory chain NADH dehydrogenase (Complex I) that is believed to belong to the minimal assembly required for catalysis. Complex I functions in the transfer of electrons from NADH to the respiratory chain. The immediate electron acceptor for the enzyme is believed to be ubiquinone. The polypeptide is NADH-ubiquinone oxidoreductase chain 5 (ND5) (Paracentrotus lividus (Common sea urchin)).